Reading from the N-terminus, the 463-residue chain is Cysteine--tRNA ligase (463 aa).

Cys33 is a binding site for Zn(2+). The short motif at 35–45 (PTVYDFAHIGN) is the 'HIGH' region element. 3 residues coordinate Zn(2+): Cys221, His246, and Glu250. The 'KMSKS' region motif lies at 279 to 283 (KMSKS). Position 282 (Lys282) interacts with ATP.

The protein belongs to the class-I aminoacyl-tRNA synthetase family. In terms of assembly, monomer. Zn(2+) is required as a cofactor.

It localises to the cytoplasm. The enzyme catalyses tRNA(Cys) + L-cysteine + ATP = L-cysteinyl-tRNA(Cys) + AMP + diphosphate. The sequence is that of Cysteine--tRNA ligase from Rhizobium rhizogenes (strain K84 / ATCC BAA-868) (Agrobacterium radiobacter).